The following is a 241-amino-acid chain: Carboxy-S-adenosyl-L-methionine synthase (241 aa).

Residues tyrosine 38, 63–65 (GCS), 88–89 (DN), 116–117 (DI), asparagine 131, and arginine 198 each bind S-adenosyl-L-methionine.

Belongs to the class I-like SAM-binding methyltransferase superfamily. Cx-SAM synthase family. Homodimer.

The enzyme catalyses prephenate + S-adenosyl-L-methionine = carboxy-S-adenosyl-L-methionine + 3-phenylpyruvate + H2O. Its function is as follows. Catalyzes the conversion of S-adenosyl-L-methionine (SAM) to carboxy-S-adenosyl-L-methionine (Cx-SAM). This chain is Carboxy-S-adenosyl-L-methionine synthase, found in Histophilus somni (strain 129Pt) (Haemophilus somnus).